A 566-amino-acid chain; its full sequence is Ubiquitin carboxyl-terminal hydrolase 21 (566 aa).

Composition is skewed to basic and acidic residues over residues 1 to 14 (MPQA…RTRE) and 58 to 70 (PPDE…ELGR). 2 disordered regions span residues 1 to 103 (MPQA…LPLP) and 146 to 169 (PEPP…PPTL). Low complexity-rich tracts occupy residues 71–81 (GRTSGSRPRGP) and 151–160 (LRRSTSLRRL). The Nuclear export signal motif lies at 134–152 (ELGAALSRLALRPEPPTLR). Positions 212–559 (VGLRNLGNTC…EGYVLFYQLM (348 aa)) constitute a USP domain. Cys221 acts as the Nucleophile in catalysis. Positions 324–349 (APPILASGPVPSPPRRGGGALHEEPE) are disordered. 4 residues coordinate Zn(2+): Cys385, Cys388, Cys438, and Cys441. The Proton acceptor role is filled by His519.

The protein belongs to the peptidase C19 family. USP21 subfamily. Interacts with BEND3.

Its subcellular location is the cytoplasm. The protein localises to the nucleus. It catalyses the reaction Thiol-dependent hydrolysis of ester, thioester, amide, peptide and isopeptide bonds formed by the C-terminal Gly of ubiquitin (a 76-residue protein attached to proteins as an intracellular targeting signal).. In terms of biological role, deubiquitinates histone H2A, a specific tag for epigenetic transcriptional repression, thereby acting as a coactivator. Deubiquitination of histone H2A releaves the repression of di- and trimethylation of histone H3 at 'Lys-4', resulting in regulation of transcriptional initiation. Regulates gene expression via histone H2A deubiquitination. Deubiquitinates BAZ2A/TIP5 leading to its stabilization. Also capable of removing NEDD8 from NEDD8 conjugates but has no effect on Sentrin-1 conjugates. Also acts as a negative regulator of the ribosome quality control (RQC) by mediating deubiquitination of 40S ribosomal proteins RPS10/eS10 and RPS20/uS10, thereby antagonizing ZNF598-mediated 40S ubiquitination. The chain is Ubiquitin carboxyl-terminal hydrolase 21 from Mus musculus (Mouse).